We begin with the raw amino-acid sequence, 347 residues long: 5-deoxyribose 1-phosphate isomerase (347 aa).

Substrate-binding positions include 48-50, arginine 91, and glutamine 198; that span reads RGA. Aspartate 239 acts as the Proton donor in catalysis. Substrate is bound at residue 249-250; sequence NK.

This sequence belongs to the EIF-2B alpha/beta/delta subunits family. DrdI subfamily.

It carries out the reaction 5-deoxy-alpha-D-ribose 1-phosphate = 5-deoxy-D-ribulose 1-phosphate. The protein operates within carbohydrate degradation. Functionally, catalyzes the isomerization of 5-deoxy-alpha-D-ribose 1-phosphate to 5-deoxy-D-ribulose 1-phosphate, as part of a 5-deoxyribose salvage pathway that recycles this toxic radical SAM enzyme by-product to mainstream metabolites. This chain is 5-deoxyribose 1-phosphate isomerase, found in Petrotoga mobilis (strain DSM 10674 / SJ95).